Reading from the N-terminus, the 703-residue chain is Polyribonucleotide nucleotidyltransferase (703 aa).

Asp-485 and Asp-491 together coordinate Mg(2+). Residues 552-611 (PRAYTINIDTDKIRTLIGTGGKTINKIIEETGVKIDIREDGTVFVLSSDADSANRALKMI) enclose the KH domain. Positions 621 to 689 (GEVYLGKVTK…NQGRVNLSRK (69 aa)) constitute an S1 motif domain.

The protein belongs to the polyribonucleotide nucleotidyltransferase family. Mg(2+) serves as cofactor.

It localises to the cytoplasm. It carries out the reaction RNA(n+1) + phosphate = RNA(n) + a ribonucleoside 5'-diphosphate. Involved in mRNA degradation. Catalyzes the phosphorolysis of single-stranded polyribonucleotides processively in the 3'- to 5'-direction. This Clostridium acetobutylicum (strain ATCC 824 / DSM 792 / JCM 1419 / IAM 19013 / LMG 5710 / NBRC 13948 / NRRL B-527 / VKM B-1787 / 2291 / W) protein is Polyribonucleotide nucleotidyltransferase.